Reading from the N-terminus, the 208-residue chain is V-type ATP synthase subunit D (208 aa).

The protein belongs to the V-ATPase D subunit family.

In terms of biological role, produces ATP from ADP in the presence of a proton gradient across the membrane. This Streptococcus pyogenes serotype M49 (strain NZ131) protein is V-type ATP synthase subunit D.